Here is a 686-residue protein sequence, read N- to C-terminus: Translation initiation factor IF-2 (686 aa).

The tract at residues 53–105 (EKPSVADEFEVEEKVVRSKKNSNKKKKKGKGNEDKRQENFAGRQQTQTVETPD) is disordered. Residues 69–81 (RSKKNSNKKKKKG) are compositionally biased toward basic residues. The 170-residue stretch at 188–357 (ERPAVVTIMG…LLVSEVEEYK (170 aa)) folds into the tr-type G domain. Residues 197 to 204 (GHVDHGKT) are G1. 197 to 204 (GHVDHGKT) contributes to the GTP binding site. Residues 222-226 (GITQH) are G2. The interval 243-246 (DTPG) is G3. GTP-binding positions include 243-247 (DTPGH) and 297-300 (NKMD). Positions 297-300 (NKMD) are G4. The tract at residues 333 to 335 (SAI) is G5.

This sequence belongs to the TRAFAC class translation factor GTPase superfamily. Classic translation factor GTPase family. IF-2 subfamily.

The protein resides in the cytoplasm. Functionally, one of the essential components for the initiation of protein synthesis. Protects formylmethionyl-tRNA from spontaneous hydrolysis and promotes its binding to the 30S ribosomal subunits. Also involved in the hydrolysis of GTP during the formation of the 70S ribosomal complex. In Bacillus cereus (strain ATCC 10987 / NRS 248), this protein is Translation initiation factor IF-2.